Reading from the N-terminus, the 288-residue chain is Protein PXR1 (288 aa).

In terms of domain architecture, G-patch spans 25 to 72; it reads QSRFGHKHLMRFGWQPGQGLGTQPVQSMKTHIKVSIKDDNLGLGAKLK. The disordered stretch occupies residues 147 to 258; that stretch reads SYSQMEKDSS…TSIPESVSTR (112 aa). The segment covering 157 to 166 has biased composition (acidic residues); it reads SDEESDDDED. Composition is skewed to basic residues over residues 169 to 185 and 195 to 214; these read KKHK…KKRK and KKKK…KDKK. The span at 238–256 shows a compositional bias: low complexity; it reads RTASIESSTSATSIPESVS.

This sequence belongs to the PINX1 family.

The protein resides in the nucleus. It localises to the nucleolus. In terms of biological role, involved in rRNA-processing at A0, A1 and A2 sites and negatively regulates telomerase. This Candida glabrata (strain ATCC 2001 / BCRC 20586 / JCM 3761 / NBRC 0622 / NRRL Y-65 / CBS 138) (Yeast) protein is Protein PXR1 (PXR1).